Here is a 68-residue protein sequence, read N- to C-terminus: MKTKEIRNLSDQDLQKQLEQSKSELFNLRFQLATGQLENPMMIGLVKKDIARIKTIIRERELNIGKEA.

It belongs to the universal ribosomal protein uL29 family.

In Finegoldia magna (strain ATCC 29328 / DSM 20472 / WAL 2508) (Peptostreptococcus magnus), this protein is Large ribosomal subunit protein uL29.